We begin with the raw amino-acid sequence, 153 residues long: Putative pre-16S rRNA nuclease (153 aa).

This sequence belongs to the YqgF nuclease family.

The protein resides in the cytoplasm. Its function is as follows. Could be a nuclease involved in processing of the 5'-end of pre-16S rRNA. This Koribacter versatilis (strain Ellin345) protein is Putative pre-16S rRNA nuclease.